The sequence spans 513 residues: Xylose import ATP-binding protein XylG (513 aa).

ABC transporter domains are found at residues leucine 5–glutamate 242 and leucine 259–glutamate 505. Glycine 37–serine 44 lines the ATP pocket.

The protein belongs to the ABC transporter superfamily. Xylose importer (TC 3.A.1.2.4) family. As to quaternary structure, the complex is composed of two ATP-binding proteins (XylG), two transmembrane proteins (XylH) and a solute-binding protein (XylF).

Its subcellular location is the cell inner membrane. It catalyses the reaction D-xylose(out) + ATP + H2O = D-xylose(in) + ADP + phosphate + H(+). Its function is as follows. Part of the ABC transporter complex XylFGH involved in xylose import. Responsible for energy coupling to the transport system. The XylFGH system can also transport ribose in absence of xylose. The chain is Xylose import ATP-binding protein XylG from Escherichia coli (strain K12).